The chain runs to 302 residues: Sulfate adenylyltransferase subunit 2 (302 aa).

It belongs to the PAPS reductase family. CysD subfamily. Heterodimer composed of CysD, the smaller subunit, and CysN.

It catalyses the reaction sulfate + ATP + H(+) = adenosine 5'-phosphosulfate + diphosphate. The protein operates within sulfur metabolism; hydrogen sulfide biosynthesis; sulfite from sulfate: step 1/3. In terms of biological role, with CysN forms the ATP sulfurylase (ATPS) that catalyzes the adenylation of sulfate producing adenosine 5'-phosphosulfate (APS) and diphosphate, the first enzymatic step in sulfur assimilation pathway. APS synthesis involves the formation of a high-energy phosphoric-sulfuric acid anhydride bond driven by GTP hydrolysis by CysN coupled to ATP hydrolysis by CysD. In Parabacteroides distasonis (strain ATCC 8503 / DSM 20701 / CIP 104284 / JCM 5825 / NCTC 11152), this protein is Sulfate adenylyltransferase subunit 2.